A 161-amino-acid chain; its full sequence is Regulator of ribonuclease activity A (161 aa).

Belongs to the RraA family. Homotrimer. Binds to both RNA-binding sites in the C-terminal region of Rne and to RhlB.

It localises to the cytoplasm. Functionally, globally modulates RNA abundance by binding to RNase E (Rne) and regulating its endonucleolytic activity. Can modulate Rne action in a substrate-dependent manner by altering the composition of the degradosome. Modulates RNA-binding and helicase activities of the degradosome. This is Regulator of ribonuclease activity A from Escherichia fergusonii (strain ATCC 35469 / DSM 13698 / CCUG 18766 / IAM 14443 / JCM 21226 / LMG 7866 / NBRC 102419 / NCTC 12128 / CDC 0568-73).